The sequence spans 271 residues: Formamidopyrimidine-DNA glycosylase (271 aa).

Residue P2 is the Schiff-base intermediate with DNA of the active site. The active-site Proton donor is the E3. K58 acts as the Proton donor; for beta-elimination activity in catalysis. The DNA site is built by H91, R110, and R152. Residues 237-271 (QIYGRSAHPCPICGTPIRLERIGQRASYYCTQCQH) form an FPG-type zinc finger. R261 functions as the Proton donor; for delta-elimination activity in the catalytic mechanism.

Belongs to the FPG family. As to quaternary structure, monomer. Zn(2+) serves as cofactor.

It catalyses the reaction Hydrolysis of DNA containing ring-opened 7-methylguanine residues, releasing 2,6-diamino-4-hydroxy-5-(N-methyl)formamidopyrimidine.. It carries out the reaction 2'-deoxyribonucleotide-(2'-deoxyribose 5'-phosphate)-2'-deoxyribonucleotide-DNA = a 3'-end 2'-deoxyribonucleotide-(2,3-dehydro-2,3-deoxyribose 5'-phosphate)-DNA + a 5'-end 5'-phospho-2'-deoxyribonucleoside-DNA + H(+). Involved in base excision repair of DNA damaged by oxidation or by mutagenic agents. Acts as a DNA glycosylase that recognizes and removes damaged bases. Has a preference for oxidized purines, such as 7,8-dihydro-8-oxoguanine (8-oxoG). Has AP (apurinic/apyrimidinic) lyase activity and introduces nicks in the DNA strand. Cleaves the DNA backbone by beta-delta elimination to generate a single-strand break at the site of the removed base with both 3'- and 5'-phosphates. This is Formamidopyrimidine-DNA glycosylase from Nitrosococcus oceani (strain ATCC 19707 / BCRC 17464 / JCM 30415 / NCIMB 11848 / C-107).